A 373-amino-acid chain; its full sequence is SWI/SNF-related matrix-associated actin-dependent regulator of chromatin subfamily B member 1-A (373 aa).

The interval 1–101 is DNA-binding; the sequence is MALSKTYGQK…DEKYKAVSIS (101 aa).

This sequence belongs to the SNF5 family. Component of the multiprotein chromatin-remodeling complexes SWI/SNF. Component of neural progenitors-specific chromatin remodeling complex (npBAF complex) and the neuron-specific chromatin remodeling complex (nBAF complex). Component of the BAF (SWI/SNF) chromatin remodeling complex. Component of the SWI/SNF-B (PBAF) chromatin remodeling complex. Binds to double-stranded DNA.

The protein localises to the nucleus. Involved in chromatin-remodeling. Core component of the BAF (SWI/SNF) complex. This ATP-dependent chromatin-remodeling complex plays important roles in cell proliferation and differentiation, in cellular antiviral activities and inhibition of tumor formation. Belongs to the neural progenitors-specific chromatin remodeling complex (npBAF complex) and the neuron-specific chromatin remodeling complex (nBAF complex) and may play a role in neural development. The sequence is that of SWI/SNF-related matrix-associated actin-dependent regulator of chromatin subfamily B member 1-A (smarcb1a) from Danio rerio (Zebrafish).